The sequence spans 510 residues: Leucine-rich repeat-containing protein 14B (510 aa).

The stretch at 100–137 (SNRLRVADFTGIQDVQVQQCPCGRALGRWGRTKVLART) is one LRR 1; degenerate repeat. The stretch at 181–205 (QVCCPSLRADSLSPGQLLQVLGLAG) is one LRR 2; degenerate repeat. An LRR 4; degenerate repeat occupies 234-273 (FPQLTSLTLPTKAFDAPPTCAPDPEGEDLLLTSIAWELSQ). 5 LRR repeats span residues 274 to 298 (MNQL…LSPL), 299 to 330 (KTPL…AHLE), 331 to 349 (VLDL…TFFR), 355 to 382 (AQTL…GLSP), and 383 to 407 (CSQL…LFAA).

It belongs to the PRAME family. LRRC14 subfamily.

This Mus musculus (Mouse) protein is Leucine-rich repeat-containing protein 14B.